We begin with the raw amino-acid sequence, 429 residues long: MANVVVVGSQWGDEGKGKIVDWLSERADVIVRYQGGHNAGHTLVIDGVSYKLSLLPSGLVRGKLSVIGNGVVVDPHHFVAETEKLRAQGIDINPDVLRIAENAPLILSIHRDLDAMREGSNSGLKIGTTKRGIGPAYEDKVGRRAIRVIDLAEPETLQPKVERLLAHHNLLRRGMGLEEIAVETILTELTSVADQILPYIDQVWRVLDERRKAGDRILFEGAQGALLDNDHGTYPFVTSSNTVAGQAAAGSGLGPTAIGYVLGITKAYTTRVGEGPFPTELNDEIGEFLGTKGHEFGVVTGRKRRCGWFDAVIVRQTVRTSGITGIALTKLDVLDGLDEIKICVAYELDGKRIDYLPSSMGAQARVKPIYETLPGWSETTAGARSWNDLPAQAVKYVRHIEELIGAPVAMLSTSPEREDTILVTDPFHD.

Residues 12 to 18 and 40 to 42 each bind GTP; these read GDEGKGK and GHT. Residue aspartate 13 is the Proton acceptor of the active site. Residues aspartate 13 and glycine 40 each coordinate Mg(2+). IMP contacts are provided by residues 13–16, 38–41, threonine 129, arginine 143, glutamine 223, threonine 238, and arginine 302; these read DEGK and NAGH. Histidine 41 serves as the catalytic Proton donor. 298–304 contributes to the substrate binding site; that stretch reads VVTGRKR. Residues arginine 304, 330 to 332, and 412 to 414 each bind GTP; these read KLD and STS.

Belongs to the adenylosuccinate synthetase family. Homodimer. The cofactor is Mg(2+).

Its subcellular location is the cytoplasm. The catalysed reaction is IMP + L-aspartate + GTP = N(6)-(1,2-dicarboxyethyl)-AMP + GDP + phosphate + 2 H(+). Its pathway is purine metabolism; AMP biosynthesis via de novo pathway; AMP from IMP: step 1/2. Functionally, plays an important role in the de novo pathway of purine nucleotide biosynthesis. Catalyzes the first committed step in the biosynthesis of AMP from IMP. This Brucella anthropi (strain ATCC 49188 / DSM 6882 / CCUG 24695 / JCM 21032 / LMG 3331 / NBRC 15819 / NCTC 12168 / Alc 37) (Ochrobactrum anthropi) protein is Adenylosuccinate synthetase.